The following is a 503-amino-acid chain: uncharacterized protein (503 aa).

2 consecutive ABC transporter domains span residues 8–249 and 261–499; these read VPVA…LGRD and IVDQ…MSAI. 43–50 is a binding site for ATP; sequence GKNGAGKS.

This sequence belongs to the ABC transporter superfamily.

Its function is as follows. Probably part of a binding-protein-dependent transport system YphDEF. Probably responsible for energy coupling to the transport system. This is an uncharacterized protein from Escherichia coli (strain K12).